Consider the following 84-residue polypeptide: Delta-thalatoxin-Cad1a (84 aa).

Positions 1–19 (MAYLKIVLVALMLVLAVSA) are cleaved as a signal peptide. A propeptide spanning residues 20–33 (MRRPDQQDQDISVA) is cleaved from the precursor. Intrachain disulfides connect Cys38–Cys78, Cys40–Cys68, and Cys61–Cys79.

It belongs to the sea anemone sodium channel inhibitory toxin family. Type II subfamily.

The protein resides in the secreted. It localises to the nematocyst. Binds specifically to the voltage-gated sodium channel (Nav) and delays its inactivation. The polypeptide is Delta-thalatoxin-Cad1a (Cryptodendrum adhaesivum (Adhesive sea anemone)).